We begin with the raw amino-acid sequence, 66 residues long: Beta-defensin 107A (66 aa).

The signal sequence occupies residues 1–22; sequence MKIFFFIFAALFLLAQIFQART. Cystine bridges form between C37–C51 and C41–C60.

This sequence belongs to the beta-defensin family.

It is found in the secreted. In terms of biological role, has antibacterial activity. The polypeptide is Beta-defensin 107A (DEFB107A) (Gorilla gorilla gorilla (Western lowland gorilla)).